We begin with the raw amino-acid sequence, 248 residues long: Probable transcriptional regulatory protein PP_1214 (248 aa).

The disordered stretch occupies residues Met1–Arg21.

Belongs to the TACO1 family.

The protein localises to the cytoplasm. In Pseudomonas putida (strain ATCC 47054 / DSM 6125 / CFBP 8728 / NCIMB 11950 / KT2440), this protein is Probable transcriptional regulatory protein PP_1214.